The primary structure comprises 116 residues: Ribonuclease P protein component (116 aa).

The protein belongs to the RnpA family. As to quaternary structure, consists of a catalytic RNA component (M1 or rnpB) and a protein subunit.

The catalysed reaction is Endonucleolytic cleavage of RNA, removing 5'-extranucleotides from tRNA precursor.. RNaseP catalyzes the removal of the 5'-leader sequence from pre-tRNA to produce the mature 5'-terminus. It can also cleave other RNA substrates such as 4.5S RNA. The protein component plays an auxiliary but essential role in vivo by binding to the 5'-leader sequence and broadening the substrate specificity of the ribozyme. In Citrifermentans bemidjiense (strain ATCC BAA-1014 / DSM 16622 / JCM 12645 / Bem) (Geobacter bemidjiensis), this protein is Ribonuclease P protein component.